Reading from the N-terminus, the 295-residue chain is Formamidopyrimidine-DNA glycosylase (295 aa).

The active-site Schiff-base intermediate with DNA is Pro2. Glu3 functions as the Proton donor in the catalytic mechanism. Residue Lys61 is the Proton donor; for beta-elimination activity of the active site. Residues His95, Arg117, and Arg159 each coordinate DNA. The FPG-type zinc-finger motif lies at 245 to 279 (HAYGREGEACERCGTPIRRVAFMNRSSYFCPVCQP). Arg269 (proton donor; for delta-elimination activity) is an active-site residue.

It belongs to the FPG family. In terms of assembly, monomer. Zn(2+) is required as a cofactor.

It carries out the reaction Hydrolysis of DNA containing ring-opened 7-methylguanine residues, releasing 2,6-diamino-4-hydroxy-5-(N-methyl)formamidopyrimidine.. The enzyme catalyses 2'-deoxyribonucleotide-(2'-deoxyribose 5'-phosphate)-2'-deoxyribonucleotide-DNA = a 3'-end 2'-deoxyribonucleotide-(2,3-dehydro-2,3-deoxyribose 5'-phosphate)-DNA + a 5'-end 5'-phospho-2'-deoxyribonucleoside-DNA + H(+). In terms of biological role, involved in base excision repair of DNA damaged by oxidation or by mutagenic agents. Acts as a DNA glycosylase that recognizes and removes damaged bases. Has a preference for oxidized purines, such as 7,8-dihydro-8-oxoguanine (8-oxoG). Has AP (apurinic/apyrimidinic) lyase activity and introduces nicks in the DNA strand. Cleaves the DNA backbone by beta-delta elimination to generate a single-strand break at the site of the removed base with both 3'- and 5'-phosphates. The polypeptide is Formamidopyrimidine-DNA glycosylase (Nocardioides sp. (strain ATCC BAA-499 / JS614)).